The primary structure comprises 270 residues: Centriole, cilia and spindle-associated protein (270 aa).

Met-1 is modified (N-acetylmethionine). Residues 9–15 carry the ST]-E-Y-X(3)-Y motif 1; required for efficient microtubule binding and stabilization motif; the sequence is SEYMKRY. 2 disordered regions span residues 50–201 and 231–255; these read DDWG…SQKT and LVAQ…SSSE. Residues 53–67 are compositionally biased toward low complexity; the sequence is GPAGSSEDSASSESS. Positions 75–86 are enriched in pro residues; that stretch reads RCAPPSPPPPVE. Residues 92–101 show a composition bias toward basic and acidic residues; it reads EAERRARGAP. The segment covering 102 to 118 has biased composition (acidic residues); that stretch reads EEQDAEAGDAEAEDAED. The segment covering 127-144 has biased composition (basic and acidic residues); that stretch reads KDVEDKPEQQTRTRETDK. Positions 145 to 156 are enriched in polar residues; it reads SPTSTEPRQQPS. The short motif at 260-266 is the ST]-E-Y-X(3)-Y motif 2; required for efficient microtubule binding and stabilization element; the sequence is TEYMRCY.

It belongs to the CCSAP family. Associates with microtubules; the association occurs on polyglutamylated tubulin.

The protein localises to the cytoplasm. It is found in the cytoskeleton. The protein resides in the microtubule organizing center. It localises to the centrosome. Its subcellular location is the centriole. The protein localises to the spindle. It is found in the cilium basal body. The protein resides in the cilium axoneme. It localises to the cell projection. Its subcellular location is the axon. The protein localises to the cilium. In terms of biological role, plays a role in microtubule (MT) stabilization and this stabilization involves the maintenance of NUMA1 at the spindle poles. Colocalizes with polyglutamylated MTs to promote MT stabilization and regulate bipolar spindle formation in mitosis. Binding of CCSAP to centrosomes and the spindle around centrosomes during mitosis inhibits MT depolymerization, thereby stabilizing the mitotic spindle. May play a role in embryonic development. May be required for proper cilia beating. The protein is Centriole, cilia and spindle-associated protein (CCSAP) of Homo sapiens (Human).